Reading from the N-terminus, the 256-residue chain is tRNA pseudouridine synthase A (256 aa).

The active-site Nucleophile is the aspartate 52. Tyrosine 110 lines the substrate pocket.

The protein belongs to the tRNA pseudouridine synthase TruA family. Homodimer.

The catalysed reaction is uridine(38/39/40) in tRNA = pseudouridine(38/39/40) in tRNA. Formation of pseudouridine at positions 38, 39 and 40 in the anticodon stem and loop of transfer RNAs. This Stenotrophomonas maltophilia (strain R551-3) protein is tRNA pseudouridine synthase A.